We begin with the raw amino-acid sequence, 495 residues long: Zinc finger and SCAN domain-containing protein 5B (495 aa).

The tract at residues 1–40 is disordered; it reads MAANWTLSWGQGGPCNSPGSDTPRSVASPETQLGNHDRNP. The segment covering 17-34 has biased composition (polar residues); that stretch reads SPGSDTPRSVASPETQLG. Positions 44–126 constitute an SCAN box domain; it reads HMNFRMFSCP…DLLRNNRRPK (83 aa). Disordered regions lie at residues 150–183 and 227–347; these read APAS…RREQ and ENRE…PDGQ. The span at 161–173 shows a compositional bias: polar residues; sequence VSSQWASSVNQMH. The segment covering 250–262 has biased composition (basic and acidic residues); it reads RAKEGKEPQKRAS. Residues 292 to 310 are compositionally biased toward polar residues; that stretch reads NLSSPKRSKPDASSISQEE. 5 C2H2-type zinc fingers span residues 355-377, 383-405, 411-433, 439-461, and 467-489; these read FACD…RRSH, FQCD…QRVH, YMCD…KRIH, FKCK…QRTH, and YKCP…LKTH.

It is found in the nucleus. May be involved in transcriptional regulation. In Homo sapiens (Human), this protein is Zinc finger and SCAN domain-containing protein 5B (ZSCAN5B).